The sequence spans 151 residues: Putative pre-16S rRNA nuclease (151 aa).

Belongs to the YqgF nuclease family.

It is found in the cytoplasm. Functionally, could be a nuclease involved in processing of the 5'-end of pre-16S rRNA. This chain is Putative pre-16S rRNA nuclease, found in Gloeothece citriformis (strain PCC 7424) (Cyanothece sp. (strain PCC 7424)).